A 487-amino-acid chain; its full sequence is b(0,+)-type amino acid transporter 1 (487 aa).

Positions 1–20 (MEETSLRRRREDEKSTHSTE) are disordered. The Cytoplasmic portion of the chain corresponds to 1–31 (MEETSLRRRREDEKSTHSTELKTTSLQKEVG). S18 bears the Phosphoserine mark. The chain crosses the membrane as a helical span at residues 32-55 (LLSGICIIVGTIIGSGIFISPKSV). Residue 43–47 (IIGSG) participates in L-arginine binding. Topologically, residues 56-62 (LANTESV) are extracellular. Residues 63–84 (GPCLIIWAACGILATLGALCFA) form a helical membrane-spanning segment. Residues 85–110 (ELGTMITKSGGEYPYLMEAFGPIPAY) lie on the Cytoplasmic side of the membrane. The chain crosses the membrane as a helical span at residues 111–137 (LFSWTSLIVMKPSSFAIICLSFSEYVC). Residues 138–147 (AAFYSGCKPP) are Extracellular-facing. 2 helical membrane passes run 148–169 (AVVV…NALS) and 170–193 (VRLG…IIII). Over 194 to 217 (SGLVFLAQGNVKNFQNSFEGTQTS) the chain is Extracellular. The helical transmembrane segment at 218–238 (VGAISLAFYNGLWAYDGWNQL) threads the bilayer. Residue D233 participates in L-arginine binding. The Cytoplasmic segment spans residues 239–251 (NYITEELRNPYRN). The chain crosses the membrane as a helical span at residues 252–274 (LPMAIVIGIPLVTVCYILMNIAY). Topologically, residues 275-302 (FTVMTPTELLQSQAVAVTFGDRVLYPAS) are extracellular. The helical transmembrane segment at 303 to 325 (WVVPLFVAFSTIGAANGTCFTAG) threads the bilayer. The Cytoplasmic portion of the chain corresponds to 326–351 (RLIYVAGREGHMLKVLSYISVKRLTP). 2 helical membrane passes run 352–370 (APAL…IPGD) and 371–391 (INSL…MTIL). Residues 392–410 (GLVVMRFTRKDLERPIKVP) are Cytoplasmic-facing. Residues 411-431 (LFIPIIVILVSLFLILAPIIS) form a helical membrane-spanning segment. Residues 432–434 (EPA) are Extracellular-facing. The chain crosses the membrane as a helical span at residues 435–450 (WEYLYCVLFILSGLIF). Over 451–487 (YFLFVYYKFGWAQRISRPVTKHLQMLMEVVPPEKDPE) the chain is Cytoplasmic.

This sequence belongs to the amino acid-polyamine-organocation (APC) superfamily. In terms of assembly, disulfide-linked heterodimer composed of the catalytic light chain subunit SLC7A9 and the heavy chain subunit SLC3A1. The heterodimer is the minimal functional unit. Assembles in heterotetramers (dimers of heterodimers) and higher order oligomers; the oligomerization is mediated by SLC3A1 likely to prevent degradation and facilitate heteromer trafficking to the plasma membrane. Interacts with CAV1. In terms of tissue distribution, expressed in the brush border membrane in the kidney (at protein level).

The protein resides in the apical cell membrane. The enzyme catalyses L-leucine(out) + L-arginine(in) = L-leucine(in) + L-arginine(out). It carries out the reaction L-histidine(out) + L-arginine(in) = L-histidine(in) + L-arginine(out). It catalyses the reaction L-arginine(in) + L-phenylalanine(out) = L-arginine(out) + L-phenylalanine(in). The catalysed reaction is L-cysteine(out) + L-arginine(in) = L-cysteine(in) + L-arginine(out). The enzyme catalyses L-cystine(out) + L-arginine(in) = L-cystine(in) + L-arginine(out). It carries out the reaction L-lysine(out) + L-arginine(in) = L-lysine(in) + L-arginine(out). Its function is as follows. Associates with SLC3A1 to form a functional transporter complex that mediates the electrogenic exchange between cationic amino acids and neutral amino acids, with a stoichiometry of 1:1. Has system b(0,+)-like activity with high affinity for extracellular cationic amino acids and L-cystine and lower affinity for intracellular neutral amino acids. Substrate exchange is driven by high concentration of intracellular neutral amino acids and the intracellular reduction of L-cystine to L-cysteine. Required for reabsorption of L-cystine and dibasic amino acids across the brush border membrane in renal proximal tubules. This is b(0,+)-type amino acid transporter 1 (Slc7a9) from Mus musculus (Mouse).